The following is a 386-amino-acid chain: Synaptotagmin-5 (386 aa).

Pro residues predominate over residues methionine 1–proline 16. The segment at methionine 1–arginine 21 is disordered. Residues methionine 1–glutamine 24 lie on the Vesicular side of the membrane. The helical transmembrane segment at glycine 25 to serine 45 threads the bilayer. Residues serine 46–proline 386 are Cytoplasmic-facing. C2 domains lie at glutamine 108–arginine 227 and lysine 239–histidine 372. Ca(2+) is bound by residues leucine 138, aspartate 139, aspartate 145, aspartate 197, phenylalanine 198, aspartate 199, serine 202, aspartate 205, aspartate 270, aspartate 276, aspartate 330, and aspartate 332.

This sequence belongs to the synaptotagmin family. Homodimer. Interacts with both alpha- and beta-tubulin. Ca(2+) serves as cofactor. In terms of tissue distribution, expressed in kidney, adipose tissue, lung and heart, as well as at higher levels in brain.

The protein localises to the cytoplasmic vesicle. It is found in the secretory vesicle. The protein resides in the synaptic vesicle membrane. Its subcellular location is the recycling endosome membrane. Functionally, may be involved in Ca(2+)-dependent exocytosis of secretory vesicles through Ca(2+) and phospholipid binding to the C2 domain or may serve as Ca(2+) sensors in the process of vesicular trafficking and exocytosis. Regulates the Ca(2+)-dependent secretion of norepinephrine in PC12 cells. Required for export from the endocytic recycling compartment to the cell surface. The polypeptide is Synaptotagmin-5 (Syt5) (Rattus norvegicus (Rat)).